The following is a 548-amino-acid chain: uncharacterized protein (548 aa).

The region spanning 8–200 (KLFADMIIQG…LLCVYEGFLK (193 aa)) is the DhaL domain.

This is an uncharacterized protein from Staphylococcus aureus (strain NCTC 8325 / PS 47).